The following is a 29-amino-acid chain: GDLPICGETCFGGTCNTPGCVCAWPVCNR.

Positions 1-29 form a cross-link, cyclopeptide (Gly-Arg); the sequence is GDLPICGETCFGGTCNTPGCVCAWPVCNR. 3 disulfide bridges follow: cysteine 6–cysteine 20, cysteine 10–cysteine 22, and cysteine 15–cysteine 27.

In terms of processing, this is a cyclic peptide.

Probably participates in a plant defense mechanism. The chain is Cyclotide psyleio B from Psychotria brachyceras.